Reading from the N-terminus, the 315-residue chain is Protein-methionine-sulfoxide reductase catalytic subunit MsrP (315 aa).

Positions 1–45 (MPSYRPPKIASSEITPRQVYLRRREFLGAATLGAMALYGAGKASA) form a signal peptide, tat-type signal. Mo-molybdopterin-binding positions include asparagine 71, 74-75 (YE), cysteine 129, threonine 164, asparagine 214, arginine 219, and 230-232 (GIK).

It belongs to the MsrP family. As to quaternary structure, heterodimer of a catalytic subunit (MsrP) and a heme-binding subunit (MsrQ). Mo-molybdopterin serves as cofactor. Post-translationally, predicted to be exported by the Tat system. The position of the signal peptide cleavage has not been experimentally proven.

It is found in the periplasm. The enzyme catalyses L-methionyl-[protein] + a quinone + H2O = L-methionyl-(S)-S-oxide-[protein] + a quinol. The catalysed reaction is L-methionyl-[protein] + a quinone + H2O = L-methionyl-(R)-S-oxide-[protein] + a quinol. Its function is as follows. Part of the MsrPQ system that repairs oxidized periplasmic proteins containing methionine sulfoxide residues (Met-O), using respiratory chain electrons. Thus protects these proteins from oxidative-stress damage caused by reactive species of oxygen and chlorine generated by the host defense mechanisms. MsrPQ is essential for the maintenance of envelope integrity under bleach stress, rescuing a wide series of structurally unrelated periplasmic proteins from methionine oxidation. The catalytic subunit MsrP is non-stereospecific, being able to reduce both (R-) and (S-) diastereoisomers of methionine sulfoxide. The polypeptide is Protein-methionine-sulfoxide reductase catalytic subunit MsrP (Rhizobium etli (strain ATCC 51251 / DSM 11541 / JCM 21823 / NBRC 15573 / CFN 42)).